The sequence spans 385 residues: Mannitol-1-phosphate 5-dehydrogenase (385 aa).

3 to 14 (ALHFGAGNIGRG) serves as a coordination point for NAD(+).

This sequence belongs to the mannitol dehydrogenase family.

The catalysed reaction is D-mannitol 1-phosphate + NAD(+) = beta-D-fructose 6-phosphate + NADH + H(+). This is Mannitol-1-phosphate 5-dehydrogenase from Pasteurella multocida (strain Pm70).